A 689-amino-acid polypeptide reads, in one-letter code: MNFENLLIELGTEELPPKSLRKLAESFLANFTEELTKADLAFSSAVWYAAPRRLAIKVTELALAQADKVVEKRGPAVSSAFDAEGKPTKAAEGWARGNGITVEQAERLVTDKGEWLVHNAKVEGVETKSLIAAMAQRALDKLPIPKPMRWGNNKTQFIRPVHTATMLLGSELIEGELLGIKSARTVRGHRFMGLKQFELAHADHYLADLKEKGKVIADYESRKALIKADAEKAAAKIGGTADIEDSLLEEVASLVEWPVVLTASFEEKFLAVPSEALVYTMKGDQKYFPVFDDAGKLLPNFIFVTNIESKDPAQIISGNEKVVRPRLADAEFFFNTDKKHTLESRLPSLETVLFQQQLGTLKDKVNRISALAAFIAEQTGANAVDAARAGLLSKTDLMTNMVMEFTDTQGTMGMHYARLDGETEAVAVAMEEQYKPKFSGDTVPSAGVSCAVALADKLDTLVGIFGIGQAPKGAADPFALRRAAIGVLRIIVENKLPLDLVTLIAKAQELHGTNLSNANAAEEVLEFLMARFRAWYQDKGIGVDVILAVLARRPTRPADFDSRINAVSHFRSLEASSALAAANKRVSNILAKVEGALPTTINASLLTEAAEQALAAKLNELQPQLAPLFANADYQQALTLLAGLRESVDQFFEDVMVMADDEALKNNRLALLNNLREQFLHVADISLLQ.

Belongs to the class-II aminoacyl-tRNA synthetase family. Tetramer of two alpha and two beta subunits.

Its subcellular location is the cytoplasm. It carries out the reaction tRNA(Gly) + glycine + ATP = glycyl-tRNA(Gly) + AMP + diphosphate. The chain is Glycine--tRNA ligase beta subunit from Shewanella baltica (strain OS195).